Reading from the N-terminus, the 78-residue chain is Large ribosomal subunit protein bL28 (78 aa).

It belongs to the bacterial ribosomal protein bL28 family.

The sequence is that of Large ribosomal subunit protein bL28 from Flavobacterium psychrophilum (strain ATCC 49511 / DSM 21280 / CIP 103535 / JIP02/86).